The sequence spans 568 residues: Urease subunit alpha (568 aa).

The Urease domain maps to 131 to 568 (GGMDAHIHFI…LPLAQRYFLY (438 aa)). Positions 136, 138, and 219 each coordinate Ni(2+). Lys219 is modified (N6-carboxylysine). Residue His221 participates in substrate binding. The Ni(2+) site is built by His248 and His274. Catalysis depends on His322, which acts as the Proton donor. Asp362 is a Ni(2+) binding site.

Belongs to the metallo-dependent hydrolases superfamily. Urease alpha subunit family. Heterotrimer of UreA (gamma), UreB (beta) and UreC (alpha) subunits. Three heterotrimers associate to form the active enzyme. Requires Ni cation as cofactor. In terms of processing, carboxylation allows a single lysine to coordinate two nickel ions.

It localises to the cytoplasm. It carries out the reaction urea + 2 H2O + H(+) = hydrogencarbonate + 2 NH4(+). The protein operates within nitrogen metabolism; urea degradation; CO(2) and NH(3) from urea (urease route): step 1/1. This Cereibacter sphaeroides (strain ATCC 17025 / ATH 2.4.3) (Rhodobacter sphaeroides) protein is Urease subunit alpha.